The chain runs to 181 residues: Probable cobalt-precorrin-6B C(15)-methyltransferase (decarboxylating) (181 aa).

S-adenosyl-L-methionine-binding positions include Thr16, 40 to 44, Asp61, and Ala89; that span reads GCGSG.

Belongs to the methyltransferase superfamily. Archaeal-type CbiT family.

It carries out the reaction Co-precorrin-6B + S-adenosyl-L-methionine = Co-precorrin-7 + S-adenosyl-L-homocysteine + CO2. The protein operates within cofactor biosynthesis; adenosylcobalamin biosynthesis; cob(II)yrinate a,c-diamide from sirohydrochlorin (anaerobic route): step 8/10. In terms of biological role, catalyzes the methylation of C-15 in cobalt-precorrin-6B followed by the decarboxylation of C-12 to form cobalt-precorrin-7. The protein is Probable cobalt-precorrin-6B C(15)-methyltransferase (decarboxylating) of Methanococcus maripaludis (strain DSM 14266 / JCM 13030 / NBRC 101832 / S2 / LL).